The sequence spans 219 residues: tRNA (guanine-N(7)-)-methyltransferase (219 aa).

Positions 44, 69, 102, and 125 each coordinate S-adenosyl-L-methionine. Residues K129 and D161 each contribute to the substrate site.

This sequence belongs to the class I-like SAM-binding methyltransferase superfamily. TrmB family.

It catalyses the reaction guanosine(46) in tRNA + S-adenosyl-L-methionine = N(7)-methylguanosine(46) in tRNA + S-adenosyl-L-homocysteine. Its pathway is tRNA modification; N(7)-methylguanine-tRNA biosynthesis. Catalyzes the formation of N(7)-methylguanine at position 46 (m7G46) in tRNA. In Clostridium perfringens (strain SM101 / Type A), this protein is tRNA (guanine-N(7)-)-methyltransferase.